The chain runs to 567 residues: Glucose-6-phosphate isomerase, cytosolic (567 aa).

The active-site Proton donor is the E360. Catalysis depends on residues H391 and K516.

The protein belongs to the GPI family. In terms of assembly, homodimer.

The protein resides in the cytoplasm. The catalysed reaction is alpha-D-glucose 6-phosphate = beta-D-fructose 6-phosphate. Its pathway is carbohydrate degradation; glycolysis; D-glyceraldehyde 3-phosphate and glycerone phosphate from D-glucose: step 2/4. The chain is Glucose-6-phosphate isomerase, cytosolic (PHI1) from Zea mays (Maize).